The following is a 292-amino-acid chain: Lipoyl synthase (292 aa).

Positions 34, 39, 45, 60, 64, 67, and 273 each coordinate [4Fe-4S] cluster. One can recognise a Radical SAM core domain in the interval 46 to 262 (WNKKHATVMI…KYVAYSKGFL (217 aa)).

Belongs to the radical SAM superfamily. Lipoyl synthase family. The cofactor is [4Fe-4S] cluster.

It localises to the cytoplasm. The catalysed reaction is [[Fe-S] cluster scaffold protein carrying a second [4Fe-4S](2+) cluster] + N(6)-octanoyl-L-lysyl-[protein] + 2 oxidized [2Fe-2S]-[ferredoxin] + 2 S-adenosyl-L-methionine + 4 H(+) = [[Fe-S] cluster scaffold protein] + N(6)-[(R)-dihydrolipoyl]-L-lysyl-[protein] + 4 Fe(3+) + 2 hydrogen sulfide + 2 5'-deoxyadenosine + 2 L-methionine + 2 reduced [2Fe-2S]-[ferredoxin]. The protein operates within protein modification; protein lipoylation via endogenous pathway; protein N(6)-(lipoyl)lysine from octanoyl-[acyl-carrier-protein]: step 2/2. Functionally, catalyzes the radical-mediated insertion of two sulfur atoms into the C-6 and C-8 positions of the octanoyl moiety bound to the lipoyl domains of lipoate-dependent enzymes, thereby converting the octanoylated domains into lipoylated derivatives. This is Lipoyl synthase from Ehrlichia ruminantium (strain Welgevonden).